The primary structure comprises 528 residues: Protein spinster homolog 1 (528 aa).

Residues methionine 1 to glutamate 38 are disordered. The residue at position 2 (alanine 2) is an N-acetylalanine. 12 consecutive transmembrane segments (helical) span residues leucine 60–alanine 80, glycine 98–leucine 118, tyrosine 126–proline 146, valine 160–valine 180, methionine 187–serine 207, tryptophan 218–valine 238, leucine 278–leucine 298, leucine 323–isoleucine 343, leucine 357–alanine 377, isoleucine 381–isoleucine 401, phenylalanine 421–isoleucine 441, and methionine 465–isoleucine 485. Serine 518 is modified (phosphoserine).

This sequence belongs to the major facilitator superfamily. Spinster (TC 2.A.1.49) family. Interacts with BCL2 and BCL2L1. Expressed in liver (at mRNA and protein levels).

Its subcellular location is the lysosome membrane. It carries out the reaction a 1-acyl-sn-glycero-3-phosphocholine(out) + H(+)(out) = a 1-acyl-sn-glycero-3-phosphocholine(in) + H(+)(in). The catalysed reaction is 1-hexadecanoyl-sn-glycero-3-phosphocholine(out) + H(+)(out) = 1-hexadecanoyl-sn-glycero-3-phosphocholine(in) + H(+)(in). The enzyme catalyses 1-(9Z-octadecenoyl)-sn-glycero-3-phosphocholine(out) + H(+)(out) = 1-(9Z-octadecenoyl)-sn-glycero-3-phosphocholine(in) + H(+)(in). It catalyses the reaction 1-(5Z,8Z,11Z,14Z-eicosatetraenoyl)-sn-glycero-3-phosphocholine(out) + H(+)(out) = 1-(5Z,8Z,11Z,14Z-eicosatetraenoyl)-sn-glycero-3-phosphocholine(in) + H(+)(in). It carries out the reaction 1-(4Z,7Z,10Z,13Z,16Z,19Z-docosahexaenoyl)-sn-glycero-3-phosphocholine(out) + H(+)(out) = 1-(4Z,7Z,10Z,13Z,16Z,19Z-docosahexaenoyl)-sn-glycero-3-phosphocholine(in) + H(+)(in). The catalysed reaction is a 1-acyl-sn-glycero-3-phosphoethanolamine(out) + H(+)(out) = a 1-acyl-sn-glycero-3-phosphoethanolamine(in) + H(+)(in). The enzyme catalyses 1-(9Z-octadecenoyl)-sn-glycero-3-phosphoethanolamine(out) + H(+)(out) = 1-(9Z-octadecenoyl)-sn-glycero-3-phosphoethanolamine(in) + H(+)(in). It catalyses the reaction 1-acyl-sn-glycero-3-phospho-(1'-sn-glycerol)(out) + H(+)(out) = 1-acyl-sn-glycero-3-phospho-(1'-sn-glycerol)(in) + H(+)(in). It carries out the reaction 1-(9Z-octadecenoyl)-sn-glycero-3-phospho-(1'-sn-glycerol)(out) + H(+)(out) = 1-(9Z-octadecenoyl)-sn-glycero-3-phospho-(1'-sn-glycerol)(in) + H(+)(in). The catalysed reaction is a 1-O-(1Z-alkenyl)-sn-glycero-3-phosphocholine(out) + H(+)(out) = a 1-O-(1Z-alkenyl)-sn-glycero-3-phosphocholine(in) + H(+)(in). The enzyme catalyses 1-(1Z-hexadecenyl)-sn-glycero-3-phosphocholine(out) + H(+)(out) = 1-(1Z-hexadecenyl)-sn-glycero-3-phosphocholine(in) + H(+)(in). It catalyses the reaction a 1-O-(1Z-alkenyl)-sn-glycero-3-phosphoethanolamine(out) + H(+)(out) = a 1-O-(1Z-alkenyl)-sn-glycero-3-phosphoethanolamine(in) + H(+)(in). It carries out the reaction 1-O-(1Z-hexadecenyl)-sn-glycero-3-phosphoethanolamine(out) + H(+)(out) = 1-O-(1Z-hexadecenyl)-sn-glycero-3-phosphoethanolamine(in) + H(+)(in). In terms of biological role, plays a critical role in the phospholipid salvage pathway from lysosomes to the cytosol. Mediates the rate-limiting, proton-dependent, lysosomal efflux of lysophospholipids, which can then be reacylated by acyltransferases in the endoplasmic reticulum to form phospholipids. Selective for zwitterionic headgroups such as lysophosphatidylcholine (LPC) and lysophosphatidylethanolamine (LPE), can also transport lysophosphatidylglycerol (LPG), but not other anionic lysophospholipids, sphingosine, nor sphingomyelin. Transports lysophospholipids with saturated, monounsaturated, and polyunsaturated fatty acids, such as 1-hexadecanoyl-sn-glycero-3-phosphocholine, 1-(9Z-octadecenoyl)-sn-glycero-3-phosphocholine and 1-(4Z,7Z,10Z,13Z,16Z,19Z-docosahexaenoyl)-sn-glycero-3-phosphocholine, respectively. Can also transport lysoplasmalogen (LPC with a fatty alcohol) such as 1-(1Z-hexadecenyl)-sn-glycero-3-phosphocholine. Essential player in lysosomal homeostasis. Crucial for cell survival under conditions of nutrient limitation. May be involved in necrotic or autophagic cell death. This Mus musculus (Mouse) protein is Protein spinster homolog 1 (Spns1).